The sequence spans 363 residues: Anhydro-N-acetylmuramic acid kinase (363 aa).

9–16 (GTSLDGID) lines the ATP pocket.

It belongs to the anhydro-N-acetylmuramic acid kinase family.

It carries out the reaction 1,6-anhydro-N-acetyl-beta-muramate + ATP + H2O = N-acetyl-D-muramate 6-phosphate + ADP + H(+). The protein operates within amino-sugar metabolism; 1,6-anhydro-N-acetylmuramate degradation. It participates in cell wall biogenesis; peptidoglycan recycling. Catalyzes the specific phosphorylation of 1,6-anhydro-N-acetylmuramic acid (anhMurNAc) with the simultaneous cleavage of the 1,6-anhydro ring, generating MurNAc-6-P. Is required for the utilization of anhMurNAc either imported from the medium or derived from its own cell wall murein, and thus plays a role in cell wall recycling. The chain is Anhydro-N-acetylmuramic acid kinase from Nitrosomonas europaea (strain ATCC 19718 / CIP 103999 / KCTC 2705 / NBRC 14298).